A 366-amino-acid polypeptide reads, in one-letter code: Carbamoyl phosphate synthase small chain (366 aa).

The CPSase stretch occupies residues 1–171; sequence MLEKRYLVLE…KTPYVSTGSD (171 aa). Residues Ser-47, Gly-221, and Gly-223 each coordinate L-glutamine. In terms of domain architecture, Glutamine amidotransferase type-1 spans 173–360; that stretch reads SVVLLDFGKK…ITMMKDFKEK (188 aa). Cys-248 serves as the catalytic Nucleophile. The L-glutamine site is built by Leu-249, Gln-252, Asn-290, Gly-292, and Tyr-293. Residues His-333 and Glu-335 contribute to the active site.

The protein belongs to the CarA family. Composed of two chains; the small (or glutamine) chain promotes the hydrolysis of glutamine to ammonia, which is used by the large (or ammonia) chain to synthesize carbamoyl phosphate. Tetramer of heterodimers (alpha,beta)4.

The enzyme catalyses hydrogencarbonate + L-glutamine + 2 ATP + H2O = carbamoyl phosphate + L-glutamate + 2 ADP + phosphate + 2 H(+). It catalyses the reaction L-glutamine + H2O = L-glutamate + NH4(+). The protein operates within amino-acid biosynthesis; L-arginine biosynthesis; carbamoyl phosphate from bicarbonate: step 1/1. It participates in pyrimidine metabolism; UMP biosynthesis via de novo pathway; (S)-dihydroorotate from bicarbonate: step 1/3. Its function is as follows. Small subunit of the glutamine-dependent carbamoyl phosphate synthetase (CPSase). CPSase catalyzes the formation of carbamoyl phosphate from the ammonia moiety of glutamine, carbonate, and phosphate donated by ATP, constituting the first step of 2 biosynthetic pathways, one leading to arginine and/or urea and the other to pyrimidine nucleotides. The small subunit (glutamine amidotransferase) binds and cleaves glutamine to supply the large subunit with the substrate ammonia. This Staphylococcus epidermidis (strain ATCC 35984 / DSM 28319 / BCRC 17069 / CCUG 31568 / BM 3577 / RP62A) protein is Carbamoyl phosphate synthase small chain.